A 798-amino-acid polypeptide reads, in one-letter code: Acetyl-CoA decarbonylase/synthase complex subunit alpha 2 (798 aa).

[4Fe-4S] cluster contacts are provided by cysteine 65, cysteine 68, cysteine 69, cysteine 71, cysteine 76, and cysteine 86. A CO-binding site is contributed by histidine 109. [Ni-4Fe-4S] cluster contacts are provided by histidine 246, cysteine 274, and cysteine 313. 2 consecutive 4Fe-4S ferredoxin-type domains span residues 395-424 and 434-463; these read EEQF…IGEA and SKLE…IDMY. [4Fe-4S] cluster contacts are provided by cysteine 405, cysteine 408, cysteine 411, cysteine 415, cysteine 443, cysteine 446, cysteine 449, and cysteine 453. Positions 511, 540, and 575 each coordinate [Ni-4Fe-4S] cluster.

Belongs to the Ni-containing carbon monoxide dehydrogenase family. Heterotetramer of two alpha and two epsilon subunits. The ACDS complex is made up of alpha, epsilon, beta, gamma and delta subunits with a probable stoichiometry of (alpha(2)epsilon(2))(4)-beta(8)-(gamma(1)delta(1))(8). It depends on [4Fe-4S] cluster as a cofactor. [Ni-4Fe-4S] cluster is required as a cofactor.

It carries out the reaction CO + 2 oxidized [2Fe-2S]-[ferredoxin] + H2O = 2 reduced [2Fe-2S]-[ferredoxin] + CO2 + 2 H(+). Part of the ACDS complex that catalyzes the reversible cleavage of acetyl-CoA, allowing autotrophic growth from CO(2). The alpha-epsilon subcomponent functions as a carbon monoxide dehydrogenase. This is Acetyl-CoA decarbonylase/synthase complex subunit alpha 2 from Archaeoglobus fulgidus (strain ATCC 49558 / DSM 4304 / JCM 9628 / NBRC 100126 / VC-16).